Reading from the N-terminus, the 858-residue chain is Bifunctional uridylyltransferase/uridylyl-removing enzyme (858 aa).

A uridylyltransferase region spans residues 1-324; sequence MSASVAEPPP…PATSGVTRVL (324 aa). The segment at 325–681 is uridylyl-removing; the sequence is SPGRFVEKQG…ARPSPVGDAL (357 aa). One can recognise an HD domain in the interval 443-565; sequence VDQHILMVLR…VGSERRLTAL (123 aa). 2 consecutive ACT domains span residues 682–761 and 790–858; these read QVLV…PEPS and ILSV…AIAV.

This sequence belongs to the GlnD family. Requires Mg(2+) as cofactor.

It carries out the reaction [protein-PII]-L-tyrosine + UTP = [protein-PII]-uridylyl-L-tyrosine + diphosphate. The enzyme catalyses [protein-PII]-uridylyl-L-tyrosine + H2O = [protein-PII]-L-tyrosine + UMP + H(+). Uridylyltransferase (UTase) activity is inhibited by glutamine, while glutamine activates uridylyl-removing (UR) activity. Functionally, modifies, by uridylylation and deuridylylation, the PII regulatory proteins (GlnB and homologs), in response to the nitrogen status of the cell that GlnD senses through the glutamine level. Under low glutamine levels, catalyzes the conversion of the PII proteins and UTP to PII-UMP and PPi, while under higher glutamine levels, GlnD hydrolyzes PII-UMP to PII and UMP (deuridylylation). Thus, controls uridylylation state and activity of the PII proteins, and plays an important role in the regulation of nitrogen assimilation and metabolism. In Burkholderia mallei (strain ATCC 23344), this protein is Bifunctional uridylyltransferase/uridylyl-removing enzyme.